The following is a 520-amino-acid chain: Putative tyrosine carboxypeptidase MATCAP2 (520 aa).

Residues 116 to 153 (EEKKYHSQKQSSSTYSKRCRKPSKSPNTSRSKDPRRMK) are disordered. Residue His331 coordinates Zn(2+). Glu332 acts as the Nucleophile in catalysis. Residues His336 and Glu367 each contribute to the Zn(2+) site.

Zn(2+) serves as cofactor.

Its function is as follows. Putative tyrosine carboxypeptidase. This is Putative tyrosine carboxypeptidase MATCAP2 from Homo sapiens (Human).